The chain runs to 112 residues: Large ribosomal subunit protein uL22 (112 aa).

This sequence belongs to the universal ribosomal protein uL22 family. Part of the 50S ribosomal subunit.

Its function is as follows. This protein binds specifically to 23S rRNA; its binding is stimulated by other ribosomal proteins, e.g. L4, L17, and L20. It is important during the early stages of 50S assembly. It makes multiple contacts with different domains of the 23S rRNA in the assembled 50S subunit and ribosome. The globular domain of the protein is located near the polypeptide exit tunnel on the outside of the subunit, while an extended beta-hairpin is found that lines the wall of the exit tunnel in the center of the 70S ribosome. The polypeptide is Large ribosomal subunit protein uL22 (Caldanaerobacter subterraneus subsp. tengcongensis (strain DSM 15242 / JCM 11007 / NBRC 100824 / MB4) (Thermoanaerobacter tengcongensis)).